A 321-amino-acid polypeptide reads, in one-letter code: Ubiquinone biosynthesis protein COQ4, mitochondrial (321 aa).

The Zn(2+) site is built by histidine 205, aspartate 206, histidine 209, and glutamate 221.

The protein belongs to the COQ4 family. Component of a multi-subunit COQ enzyme complex, composed of at least COQ3, COQ4, COQ5, COQ6, COQ7 and COQ9. Zn(2+) serves as cofactor.

It is found in the mitochondrion inner membrane. The catalysed reaction is a 4-hydroxy-3-methoxy-5-(all-trans-polyprenyl)benzoate + H(+) = a 2-methoxy-6-(all-trans-polyprenyl)phenol + CO2. It functions in the pathway cofactor biosynthesis; ubiquinone biosynthesis. Functionally, lyase that catalyzes the C1-decarboxylation of 4-hydroxy-3-methoxy-5-(all-trans-polyprenyl)benzoic acid into 2-methoxy-6-(all-trans-polyprenyl)phenol during ubiquinone biosynthesis. In Candida tropicalis (strain ATCC MYA-3404 / T1) (Yeast), this protein is Ubiquinone biosynthesis protein COQ4, mitochondrial.